The primary structure comprises 241 residues: 2-C-methyl-D-erythritol 4-phosphate cytidylyltransferase (241 aa).

Belongs to the IspD/TarI cytidylyltransferase family. IspD subfamily.

The enzyme catalyses 2-C-methyl-D-erythritol 4-phosphate + CTP + H(+) = 4-CDP-2-C-methyl-D-erythritol + diphosphate. Its pathway is isoprenoid biosynthesis; isopentenyl diphosphate biosynthesis via DXP pathway; isopentenyl diphosphate from 1-deoxy-D-xylulose 5-phosphate: step 2/6. Catalyzes the formation of 4-diphosphocytidyl-2-C-methyl-D-erythritol from CTP and 2-C-methyl-D-erythritol 4-phosphate (MEP). In Hahella chejuensis (strain KCTC 2396), this protein is 2-C-methyl-D-erythritol 4-phosphate cytidylyltransferase.